Here is a 144-residue protein sequence, read N- to C-terminus: Large ribosomal subunit protein uL24 (144 aa).

Residues 102–144 (NIVVEKPEPEPEPRKEETAEAQEAKEEAVAEEKTEVDDNDKQN) are disordered. Over residues 103-134 (IVVEKPEPEPEPRKEETAEAQEAKEEAVAEEK) the composition is skewed to basic and acidic residues. The segment covering 135-144 (TEVDDNDKQN) has biased composition (acidic residues).

Belongs to the universal ribosomal protein uL24 family. Part of the 50S ribosomal subunit.

One of two assembly initiator proteins, it binds directly to the 5'-end of the 23S rRNA, where it nucleates assembly of the 50S subunit. In terms of biological role, located at the polypeptide exit tunnel on the outside of the subunit. The protein is Large ribosomal subunit protein uL24 (rpl24) of Thermoplasma acidophilum (strain ATCC 25905 / DSM 1728 / JCM 9062 / NBRC 15155 / AMRC-C165).